Reading from the N-terminus, the 208-residue chain is LexA repressor (208 aa).

Residues 28–48 constitute a DNA-binding region (H-T-H motif); sequence RAEIARELGFRSANAAEEHLK. Catalysis depends on for autocatalytic cleavage activity residues S125 and K162.

It belongs to the peptidase S24 family. In terms of assembly, homodimer.

The enzyme catalyses Hydrolysis of Ala-|-Gly bond in repressor LexA.. Represses a number of genes involved in the response to DNA damage (SOS response), including recA and lexA. In the presence of single-stranded DNA, RecA interacts with LexA causing an autocatalytic cleavage which disrupts the DNA-binding part of LexA, leading to derepression of the SOS regulon and eventually DNA repair. The protein is LexA repressor of Aliivibrio fischeri (strain ATCC 700601 / ES114) (Vibrio fischeri).